We begin with the raw amino-acid sequence, 156 residues long: MAVRVLCACVRRLPTAFAPLPRLPTLAAARPLSTTLFAAETRTRPGAPLPALVLAQVPGRVTQLCRQYSDAPPLTLEGIKDRVLYVLKLYDKIDPEKLSVNSHFMKDLGLDSLDQVEIIMAMEDEFGFEIPDIDAEKLMCPQEIVDYIADKKDVYE.

Residues methionine 1 to tyrosine 68 constitute a mitochondrion transit peptide. A Carrier domain is found at glutamate 77 to lysine 152. Lysine 88 is subject to N6-acetyllysine. An O-(pantetheine 4'-phosphoryl)serine modification is found at serine 112.

In terms of assembly, mammalian complex I is composed of 45 different subunits. Interacts with ETFRF1. Identified in a complex composed of MALSU1, MIEF1 upstream open reading frame protein and NDUFAB1; within the trimeric complex MIEF1 upstream open reading frame protein functions as a bridging scaffold that interacts with MALSU1 on one side, and with NDUFAB1 on the other side. The complex interacts with the mitochondrial large ribosomal subunit. Interacts with alpha-1-microglobulin chain; this interaction is required for the maintenance of mitochondrial redox homeostasis. Component of the mitochondrial core iron-sulfur cluster (ISC) complex composed of NFS1, LYRM4, NDUFAB1, ISCU, FXN, and FDX2; this complex is a heterohexamer containing two copies of each monomer. Component of the cyteine desulfurase complex composed of NFS1, LYRM4 and NDUFAB1; this complex contributes to the stability and cysteine desulfurase activity of NFS1. Phosphopantetheinylation at Ser-112 is essential for interactions with LYR motif-containing proteins.

It localises to the mitochondrion. Functionally, carrier of the growing fatty acid chain in fatty acid biosynthesis. Accessory and non-catalytic subunit of the mitochondrial membrane respiratory chain NADH dehydrogenase (Complex I), which functions in the transfer of electrons from NADH to the respiratory chain. Accessory protein, of the core iron-sulfur cluster (ISC) assembly complex, that regulates, in association with LYRM4, the stability and the cysteine desulfurase activity of NFS1 and participates in the [2Fe-2S] clusters assembly on the scaffolding protein ISCU. The core iron-sulfur cluster (ISC) assembly complex is involved in the de novo synthesis of a [2Fe-2S] cluster, the first step of the mitochondrial iron-sulfur protein biogenesis. This process is initiated by the cysteine desulfurase complex (NFS1:LYRM4:NDUFAB1) that produces persulfide which is delivered on the scaffold protein ISCU in a FXN-dependent manner. Then this complex is stabilized by FDX2 which provides reducing equivalents to accomplish the [2Fe-2S] cluster assembly. Finally, the [2Fe-2S] cluster is transferred from ISCU to chaperone proteins, including HSCB, HSPA9 and GLRX5. The polypeptide is Acyl carrier protein, mitochondrial (Bos taurus (Bovine)).